The primary structure comprises 628 residues: Putative pentatricopeptide repeat-containing protein At3g13770, mitochondrial (628 aa).

Residues 1–19 (MFNLMRLIHRSFSSSPTNY) constitute a mitochondrion transit peptide. PPR repeat units follow at residues 51–85 (GFHGYDALLNACLDKRALRDGQRVHAHMIKTRYLP), 86–116 (ATYLRTRLLIFYGKCDCLEDARKVLDEMPEK), 117–151 (NVVSWTAMISRYSQTGHSSEALTVFAEMMRSDGKP), 152–186 (NEFTFATVLTSCIRASGLGLGKQIHGLIVKWNYDS), 187–217 (HIFVGSSLLDMYAKAGQIKEAREIFECLPER), 218–252 (DVVSCTAIIAGYAQLGLDEEALEMFHRLHSEGMSP), 253–287 (NYVTYASLLTALSGLALLDHGKQAHCHVLRRELPF), 288–318 (YAVLQNSLIDMYSKCGNLSYARRLFDNMPER), 319–353 (TAISWNAMLVGYSKHGLGREVLELFRLMRDEKRVK), 355–389 (DAVTLLAVLSGCSHGRMEDTGLNIFDGMVAGEYGT), and 392–422 (GTEHYGCIVDMLGRAGRIDEAFEFIKRMPSK). The type E motif stretch occupies residues 427 to 502 (VLGSLLGACR…EPGRSWIQHE (76 aa)). A type E(+) motif region spans residues 503–533 (QTLHYFHANDRTHPRREEVLAKMKEISIKMK). Positions 534 to 628 (QAGYVPDLSC…DGICSCGDYW (95 aa)) are type DYW motif.

It belongs to the PPR family. PCMP-H subfamily.

Its subcellular location is the mitochondrion. This is Putative pentatricopeptide repeat-containing protein At3g13770, mitochondrial (PCMP-H85) from Arabidopsis thaliana (Mouse-ear cress).